Here is an 884-residue protein sequence, read N- to C-terminus: Valine--tRNA ligase (884 aa).

Positions 46–56 (PNVTGKLHLGH) match the 'HIGH' region motif. The short motif at 520 to 524 (KMSKS) is the 'KMSKS' region element. Lysine 523 is a binding site for ATP. The stretch at 809–844 (LADLLNVEEELARLEKELAKWQKELNMVGKKLSNER) forms a coiled coil.

This sequence belongs to the class-I aminoacyl-tRNA synthetase family. ValS type 1 subfamily. In terms of assembly, monomer.

It is found in the cytoplasm. It carries out the reaction tRNA(Val) + L-valine + ATP = L-valyl-tRNA(Val) + AMP + diphosphate. Its function is as follows. Catalyzes the attachment of valine to tRNA(Val). As ValRS can inadvertently accommodate and process structurally similar amino acids such as threonine, to avoid such errors, it has a 'posttransfer' editing activity that hydrolyzes mischarged Thr-tRNA(Val) in a tRNA-dependent manner. The polypeptide is Valine--tRNA ligase (Streptococcus agalactiae serotype III (strain NEM316)).